We begin with the raw amino-acid sequence, 318 residues long: Biotin synthase (318 aa).

The region spanning 44–270 is the Radical SAM core domain; that stretch reads LCGDAVNLCS…INPTANIRLA (227 aa). 3 residues coordinate [4Fe-4S] cluster: C62, C66, and C69. [2Fe-2S] cluster contacts are provided by S106, C138, C198, and R268.

This sequence belongs to the radical SAM superfamily. Biotin synthase family. As to quaternary structure, homodimer. It depends on [4Fe-4S] cluster as a cofactor. [2Fe-2S] cluster serves as cofactor.

The enzyme catalyses (4R,5S)-dethiobiotin + (sulfur carrier)-SH + 2 reduced [2Fe-2S]-[ferredoxin] + 2 S-adenosyl-L-methionine = (sulfur carrier)-H + biotin + 2 5'-deoxyadenosine + 2 L-methionine + 2 oxidized [2Fe-2S]-[ferredoxin]. It functions in the pathway cofactor biosynthesis; biotin biosynthesis; biotin from 7,8-diaminononanoate: step 2/2. In terms of biological role, catalyzes the conversion of dethiobiotin (DTB) to biotin by the insertion of a sulfur atom into dethiobiotin via a radical-based mechanism. In Alkaliphilus metalliredigens (strain QYMF), this protein is Biotin synthase.